The following is a 240-amino-acid chain: Eukaryotic translation initiation factor 3 subunit J (240 aa).

The segment at 19-95 (KADVNKWAGE…FANMTPEQQL (77 aa)) is disordered. Positions 28-45 (EDEDDVKDNWEDDDEEEE) are enriched in acidic residues. Positions 46 to 56 (KKDAPKQEDTP) are enriched in basic and acidic residues. Residues 60–71 (AKPKKAAQQKKL) are compositionally biased toward basic residues. Coiled-coil stretches lie at residues 63 to 90 (KKAAQQKKLKKEDLERLQREEEEFANMT) and 176 to 235 (SNNI…DYDD). Residues 72–81 (KKEDLERLQR) show a composition bias toward basic and acidic residues.

The protein belongs to the eIF-3 subunit J family. In terms of assembly, component of the eukaryotic translation initiation factor 3 (eIF-3) complex.

Its subcellular location is the cytoplasm. Component of the eukaryotic translation initiation factor 3 (eIF-3) complex, which is involved in protein synthesis of a specialized repertoire of mRNAs and, together with other initiation factors, stimulates binding of mRNA and methionyl-tRNAi to the 40S ribosome. The eIF-3 complex specifically targets and initiates translation of a subset of mRNAs involved in cell proliferation. This is Eukaryotic translation initiation factor 3 subunit J from Anopheles gambiae (African malaria mosquito).